Here is a 362-residue protein sequence, read N- to C-terminus: Histidinol-phosphate aminotransferase 1 (362 aa).

Position 226 is an N6-(pyridoxal phosphate)lysine (K226).

The protein belongs to the class-II pyridoxal-phosphate-dependent aminotransferase family. Histidinol-phosphate aminotransferase subfamily. Homodimer. It depends on pyridoxal 5'-phosphate as a cofactor.

It catalyses the reaction L-histidinol phosphate + 2-oxoglutarate = 3-(imidazol-4-yl)-2-oxopropyl phosphate + L-glutamate. It functions in the pathway amino-acid biosynthesis; L-histidine biosynthesis; L-histidine from 5-phospho-alpha-D-ribose 1-diphosphate: step 7/9. The sequence is that of Histidinol-phosphate aminotransferase 1 from Dechloromonas aromatica (strain RCB).